The following is a 259-amino-acid chain: Phosphatidylglycerol--prolipoprotein diacylglyceryl transferase (259 aa).

The next 4 helical transmembrane spans lie at 10-30 (IGLLEIRWYSLAYIIGILFAY), 50-70 (IISWWVTGMILGGRIGYILFY), 86-106 (WKGGMSFHGASLGLFCTMYIF), and 112-132 (IKFLSAIDLCLCAVPVGIFLG). R133 serves as a coordination point for a 1,2-diacyl-sn-glycero-3-phospho-(1'-sn-glycerol). A run of 3 helical transmembrane segments spans residues 169-189 (LYEAFFEGLLLFVVMNLLFFF), 197-217 (GMLFTIFMIWYGIVRFFIEFV), and 227-247 (ILFNWITMGQLLSFIMVILGI).

It belongs to the Lgt family.

It is found in the cell inner membrane. It catalyses the reaction L-cysteinyl-[prolipoprotein] + a 1,2-diacyl-sn-glycero-3-phospho-(1'-sn-glycerol) = an S-1,2-diacyl-sn-glyceryl-L-cysteinyl-[prolipoprotein] + sn-glycerol 1-phosphate + H(+). The protein operates within protein modification; lipoprotein biosynthesis (diacylglyceryl transfer). Catalyzes the transfer of the diacylglyceryl group from phosphatidylglycerol to the sulfhydryl group of the N-terminal cysteine of a prolipoprotein, the first step in the formation of mature lipoproteins. The chain is Phosphatidylglycerol--prolipoprotein diacylglyceryl transferase from Ehrlichia ruminantium (strain Gardel).